The chain runs to 524 residues: Methylmalonyl-CoA carboxyltransferase 12S subunit (524 aa).

The CoA carboxyltransferase N-terminal domain maps to 13-268 (MEGRVEQLAE…NNTEEASFVN (256 aa)). The segment at 13–506 (MEGRVEQLAE…RRKIASALEM (494 aa)) is carboxyltransferase. Residues 274–506 (SPNTELRDIV…RRKIASALEM (233 aa)) enclose the CoA carboxyltransferase C-terminal domain.

In terms of assembly, homohexamer. Transcarboxylase is composed of three subunits: 1.3S, 5S, and 12S. The core of the enzyme is composed of six 12S subunits. On each side of the core there are three pairs of 5S subunits. Each 5S dimer is attached to the core by two 1.3S subunits. Thus the total number of chains is 30 (6 + 12 + 12).

It catalyses the reaction (S)-methylmalonyl-CoA + pyruvate = propanoyl-CoA + oxaloacetate. The 12S subunit specifically catalyzes the transfer of the carboxyl group of methylmalonyl CoA to the biotin of the 1.3S subunit forming propanoyl-CoA and carboxylated 1.3S-biotin. This Propionibacterium freudenreichii subsp. shermanii protein is Methylmalonyl-CoA carboxyltransferase 12S subunit.